A 453-amino-acid chain; its full sequence is Probable phenylalanine--tRNA ligase, mitochondrial (453 aa).

A mitochondrion-targeting transit peptide spans 1–27 (MLLTLRVQGARHWLKSTRCLASSAAPA). Substrate contacts are provided by residues 142–145 (TAHQ), arginine 164, 171–173 (THY), 178–180 (QAD), glutamate 285, and phenylalanine 310. In terms of domain architecture, FDX-ACB spans 356–453 (SHYPQCTNDL…SVDSFNVQIR (98 aa)).

Belongs to the class-II aminoacyl-tRNA synthetase family.

The protein resides in the mitochondrion matrix. It carries out the reaction tRNA(Phe) + L-phenylalanine + ATP = L-phenylalanyl-tRNA(Phe) + AMP + diphosphate + H(+). Functionally, is responsible for the charging of tRNA(Phe) with phenylalanine in mitochondrial translation. This chain is Probable phenylalanine--tRNA ligase, mitochondrial, found in Drosophila melanogaster (Fruit fly).